The primary structure comprises 133 residues: Profilin (133 aa).

The protein belongs to the profilin family.

Its function is as follows. More likely to influence phosphoinositide metabolism than actin assembly. The sequence is that of Profilin from Vaccinia virus (strain Tian Tan) (VACV).